Here is a 617-residue protein sequence, read N- to C-terminus: uncharacterized protein (617 aa).

Low complexity-rich tracts occupy residues Met-1–Ser-16 and Ser-36–Ser-45. Residues Met-1–Arg-49 form a disordered region. The next 3 helical transmembrane spans lie at Leu-219–Ala-239, Thr-262–Tyr-282, and Pro-427–Met-447.

This sequence belongs to the TMCO4 family.

The protein resides in the membrane. This is an uncharacterized protein from Caenorhabditis elegans.